Here is a 372-residue protein sequence, read N- to C-terminus: Anhydro-N-acetylmuramic acid kinase (372 aa).

12 to 19 (GTSMDALD) lines the ATP pocket.

The protein belongs to the anhydro-N-acetylmuramic acid kinase family.

It carries out the reaction 1,6-anhydro-N-acetyl-beta-muramate + ATP + H2O = N-acetyl-D-muramate 6-phosphate + ADP + H(+). Its pathway is amino-sugar metabolism; 1,6-anhydro-N-acetylmuramate degradation. The protein operates within cell wall biogenesis; peptidoglycan recycling. Catalyzes the specific phosphorylation of 1,6-anhydro-N-acetylmuramic acid (anhMurNAc) with the simultaneous cleavage of the 1,6-anhydro ring, generating MurNAc-6-P. Is required for the utilization of anhMurNAc either imported from the medium or derived from its own cell wall murein, and thus plays a role in cell wall recycling. This Coxiella burnetii (strain CbuK_Q154) (Coxiella burnetii (strain Q154)) protein is Anhydro-N-acetylmuramic acid kinase.